The sequence spans 228 residues: Leucokinins (228 aa).

The signal sequence occupies residues 1–18; that stretch reads MAMLLQVALPLLAAVSWG. Residues 19–164 constitute a propeptide that is removed on maturation; sequence WELNENDDSL…PRFSPVSAIQ (146 aa). The disordered stretch occupies residues 80–118; it reads EFSENNEAEDKSPTSAQNTQEHIPGNNFPPPAASNPPVN. 2 positions are modified to glycine amide: G180 and G193. Positions 197-209 are excised as a propeptide; that stretch reads NTGRVHRQPKVVI. G217 is modified (glycine amide). Positions 221–228 are excised as a propeptide; that stretch reads NQKDDNVF.

It is found in the secreted. Its function is as follows. Stimulates both fluid secretion by the Malpighian tubules and hindgut contractions. Depolarize the transepithelial voltage of the Malpighian tubules in concentrations of less than 10(-9) M and increase the frequency of hindgut contractions at concentrations above 10(-8) M. This Aedes aegypti (Yellowfever mosquito) protein is Leucokinins.